A 606-amino-acid polypeptide reads, in one-letter code: Arginine--tRNA ligase (606 aa).

Residues 126–136 carry the 'HIGH' region motif; the sequence is PNTNKPLHLGH.

Belongs to the class-I aminoacyl-tRNA synthetase family. As to quaternary structure, monomer.

It localises to the cytoplasm. It catalyses the reaction tRNA(Arg) + L-arginine + ATP = L-arginyl-tRNA(Arg) + AMP + diphosphate. The chain is Arginine--tRNA ligase from Phocaeicola vulgatus (strain ATCC 8482 / DSM 1447 / JCM 5826 / CCUG 4940 / NBRC 14291 / NCTC 11154) (Bacteroides vulgatus).